The primary structure comprises 200 residues: MTVVIGLTGGIASGKSTVSQMFRELSIPVIDADIIAREVVEKGKPAYNKIVEVFGTEVLQEDGELDRPKLGSVVFYNEEKRLQLNKIVHPAVREEMNRRKEMYIKEGMQAVVLDIPLLFESKLTSLVDRVLVVAVKPHTQLERLMKRNNFSEEEATARIQSQMPLEEKVKNADEVINNDGTIMGTKTQLQAILKKWNIID.

Residues 4–200 (VIGLTGGIAS…AILKKWNIID (197 aa)) enclose the DPCK domain. ATP is bound at residue 12-17 (ASGKST).

Belongs to the CoaE family.

The protein resides in the cytoplasm. The catalysed reaction is 3'-dephospho-CoA + ATP = ADP + CoA + H(+). The protein operates within cofactor biosynthesis; coenzyme A biosynthesis; CoA from (R)-pantothenate: step 5/5. Catalyzes the phosphorylation of the 3'-hydroxyl group of dephosphocoenzyme A to form coenzyme A. The protein is Dephospho-CoA kinase of Bacillus thuringiensis subsp. konkukian (strain 97-27).